The primary structure comprises 443 residues: Proline--tRNA ligase (443 aa).

It belongs to the class-II aminoacyl-tRNA synthetase family. ProS type 2 subfamily. Homodimer.

It is found in the cytoplasm. It catalyses the reaction tRNA(Pro) + L-proline + ATP = L-prolyl-tRNA(Pro) + AMP + diphosphate. Functionally, catalyzes the attachment of proline to tRNA(Pro) in a two-step reaction: proline is first activated by ATP to form Pro-AMP and then transferred to the acceptor end of tRNA(Pro). The sequence is that of Proline--tRNA ligase from Zymomonas mobilis subsp. mobilis (strain ATCC 31821 / ZM4 / CP4).